The primary structure comprises 248 residues: UPF0328 protein ECU06_0030/ECU06_1690/ECU11_0020 (248 aa).

Disordered stretches follow at residues 1-34 and 51-81; these read MVRHSKNILPKTTNPNPESNRYPPHPADPSHPSR and ASAENRRRDPQNLSTTKATSPSTHQSPILPD. Composition is skewed to polar residues over residues 10 to 19 and 61 to 76; these read PKTTNPNPES and QNLSTTKATSPSTHQS.

Belongs to the UPF0328 family.

The sequence is that of UPF0328 protein ECU06_0030/ECU06_1690/ECU11_0020 from Encephalitozoon cuniculi (strain GB-M1) (Microsporidian parasite).